Reading from the N-terminus, the 616-residue chain is Chaperone protein HscA (616 aa).

It belongs to the heat shock protein 70 family.

In terms of biological role, chaperone involved in the maturation of iron-sulfur cluster-containing proteins. Has a low intrinsic ATPase activity which is markedly stimulated by HscB. Involved in the maturation of IscU. The chain is Chaperone protein HscA from Escherichia coli O139:H28 (strain E24377A / ETEC).